We begin with the raw amino-acid sequence, 89 residues long: MALYKAQKAAIIEQFRQHENDTGSTEVQVALLTERINILTEHLREHKHDYHSRRGLMKLVGQRRRLLRYLKRTDAQRYQALIQRLGLRG.

This sequence belongs to the universal ribosomal protein uS15 family. In terms of assembly, part of the 30S ribosomal subunit. Forms a bridge to the 50S subunit in the 70S ribosome, contacting the 23S rRNA.

Functionally, one of the primary rRNA binding proteins, it binds directly to 16S rRNA where it helps nucleate assembly of the platform of the 30S subunit by binding and bridging several RNA helices of the 16S rRNA. Its function is as follows. Forms an intersubunit bridge (bridge B4) with the 23S rRNA of the 50S subunit in the ribosome. The polypeptide is Small ribosomal subunit protein uS15 (Thermomicrobium roseum (strain ATCC 27502 / DSM 5159 / P-2)).